We begin with the raw amino-acid sequence, 483 residues long: Siroheme synthase (483 aa).

Positions methionine 1–leucine 203 are precorrin-2 dehydrogenase /sirohydrochlorin ferrochelatase. Residues alanine 22–valine 23 and lysine 43–histidine 44 contribute to the NAD(+) site. Serine 128 carries the phosphoserine modification. Residues glycine 217 to alanine 483 form a uroporphyrinogen-III C-methyltransferase region. S-adenosyl-L-methionine is bound at residue proline 226. Aspartate 249 serves as the catalytic Proton acceptor. Lysine 271 functions as the Proton donor in the catalytic mechanism. Residues glycine 302 to aspartate 304, valine 307, threonine 332 to alanine 333, methionine 384, and glycine 413 each bind S-adenosyl-L-methionine.

In the N-terminal section; belongs to the precorrin-2 dehydrogenase / sirohydrochlorin ferrochelatase family. It in the C-terminal section; belongs to the precorrin methyltransferase family.

The catalysed reaction is uroporphyrinogen III + 2 S-adenosyl-L-methionine = precorrin-2 + 2 S-adenosyl-L-homocysteine + H(+). It catalyses the reaction precorrin-2 + NAD(+) = sirohydrochlorin + NADH + 2 H(+). It carries out the reaction siroheme + 2 H(+) = sirohydrochlorin + Fe(2+). The protein operates within cofactor biosynthesis; adenosylcobalamin biosynthesis; precorrin-2 from uroporphyrinogen III: step 1/1. It participates in cofactor biosynthesis; adenosylcobalamin biosynthesis; sirohydrochlorin from precorrin-2: step 1/1. Its pathway is porphyrin-containing compound metabolism; siroheme biosynthesis; precorrin-2 from uroporphyrinogen III: step 1/1. It functions in the pathway porphyrin-containing compound metabolism; siroheme biosynthesis; siroheme from sirohydrochlorin: step 1/1. The protein operates within porphyrin-containing compound metabolism; siroheme biosynthesis; sirohydrochlorin from precorrin-2: step 1/1. In terms of biological role, multifunctional enzyme that catalyzes the SAM-dependent methylations of uroporphyrinogen III at position C-2 and C-7 to form precorrin-2 via precorrin-1. Then it catalyzes the NAD-dependent ring dehydrogenation of precorrin-2 to yield sirohydrochlorin. Finally, it catalyzes the ferrochelation of sirohydrochlorin to yield siroheme. This chain is Siroheme synthase, found in Neisseria meningitidis serogroup B (strain ATCC BAA-335 / MC58).